A 148-amino-acid chain; its full sequence is Protein SprT-like (148 aa).

The 142-residue stretch at 6 to 147 (LQQLVATISM…CGRCQGPIKL (142 aa)) folds into the SprT-like domain. Position 67 (His67) interacts with Zn(2+). Glu68 is a catalytic residue. Residue His71 coordinates Zn(2+).

Belongs to the SprT family. The cofactor is Zn(2+).

It localises to the cytoplasm. This Lactiplantibacillus plantarum (strain ATCC BAA-793 / NCIMB 8826 / WCFS1) (Lactobacillus plantarum) protein is Protein SprT-like.